Consider the following 226-residue polypeptide: Cytidylate kinase (226 aa).

Position 10–18 (10–18 (GFSSTGKST)) interacts with ATP.

This sequence belongs to the cytidylate kinase family. Type 1 subfamily.

It localises to the cytoplasm. The enzyme catalyses CMP + ATP = CDP + ADP. It catalyses the reaction dCMP + ATP = dCDP + ADP. This Flavobacterium psychrophilum (strain ATCC 49511 / DSM 21280 / CIP 103535 / JIP02/86) protein is Cytidylate kinase.